Consider the following 181-residue polypeptide: Protein CENTRORADIALIS (181 aa).

It belongs to the phosphatidylethanolamine-binding protein family. In terms of assembly, may form homodimers in solution.

It is found in the cytoplasm. Functionally, expression of CEN leads to a morphological switch between shoot growth and the development of flower structures (inflorescence). May form complexes with phosphorylated ligands by interfering with kinases and their effectors. This chain is Protein CENTRORADIALIS (CEN), found in Antirrhinum majus (Garden snapdragon).